The primary structure comprises 397 residues: Acetyl-CoA acetyltransferase, cytosolic (397 aa).

Residue Met-1 is modified to N-acetylmethionine. Residue Cys-92 is the Acyl-thioester intermediate of the active site. Lys-200 is subject to N6-acetyllysine. 2 residues coordinate CoA: Arg-223 and Ser-226. Residues Lys-233 and Lys-235 each carry the N6-acetyllysine modification. Ser-252 is a binding site for CoA. Cys-383 acts as the Proton donor/acceptor in catalysis.

It belongs to the thiolase-like superfamily. Thiolase family. Homotetramer.

It localises to the cytoplasm. The protein resides in the cytosol. It catalyses the reaction 2 acetyl-CoA = acetoacetyl-CoA + CoA. It participates in lipid metabolism; fatty acid metabolism. In terms of biological role, involved in the biosynthetic pathway of cholesterol. This Mus musculus (Mouse) protein is Acetyl-CoA acetyltransferase, cytosolic (Acat2).